A 206-amino-acid chain; its full sequence is Small ribosomal subunit protein uS4 (206 aa).

In terms of domain architecture, S4 RNA-binding spans 96 to 156; it reads RRLDNVVYRM…DKSKNQSRIK (61 aa).

The protein belongs to the universal ribosomal protein uS4 family. In terms of assembly, part of the 30S ribosomal subunit. Contacts protein S5. The interaction surface between S4 and S5 is involved in control of translational fidelity.

One of the primary rRNA binding proteins, it binds directly to 16S rRNA where it nucleates assembly of the body of the 30S subunit. Its function is as follows. With S5 and S12 plays an important role in translational accuracy. The protein is Small ribosomal subunit protein uS4 of Buchnera aphidicola subsp. Schizaphis graminum (strain Sg).